A 138-amino-acid chain; its full sequence is Low molecular weight protein-tyrosine-phosphatase PtpB (138 aa).

The active-site Nucleophile is Cys-7. Arg-13 is an active-site residue. Catalysis depends on Asp-111, which acts as the Proton donor.

It belongs to the low molecular weight phosphotyrosine protein phosphatase family.

It carries out the reaction O-phospho-L-tyrosyl-[protein] + H2O = L-tyrosyl-[protein] + phosphate. In terms of biological role, dephosphorylates the phosphotyrosine-containing proteins. The sequence is that of Low molecular weight protein-tyrosine-phosphatase PtpB (ptpB) from Staphylococcus haemolyticus (strain JCSC1435).